The sequence spans 406 residues: Probable tRNA sulfurtransferase (406 aa).

Positions 60-162 constitute a THUMP domain; it reads PEAKARLQDT…PGAALLEVER (103 aa). ATP is bound by residues 180-181, 205-206, R262, G284, and Q293; these read LL and HF.

The protein belongs to the ThiI family.

The protein localises to the cytoplasm. It catalyses the reaction [ThiI sulfur-carrier protein]-S-sulfanyl-L-cysteine + a uridine in tRNA + 2 reduced [2Fe-2S]-[ferredoxin] + ATP + H(+) = [ThiI sulfur-carrier protein]-L-cysteine + a 4-thiouridine in tRNA + 2 oxidized [2Fe-2S]-[ferredoxin] + AMP + diphosphate. The enzyme catalyses [ThiS sulfur-carrier protein]-C-terminal Gly-Gly-AMP + S-sulfanyl-L-cysteinyl-[cysteine desulfurase] + AH2 = [ThiS sulfur-carrier protein]-C-terminal-Gly-aminoethanethioate + L-cysteinyl-[cysteine desulfurase] + A + AMP + 2 H(+). It functions in the pathway cofactor biosynthesis; thiamine diphosphate biosynthesis. Functionally, catalyzes the ATP-dependent transfer of a sulfur to tRNA to produce 4-thiouridine in position 8 of tRNAs, which functions as a near-UV photosensor. Also catalyzes the transfer of sulfur to the sulfur carrier protein ThiS, forming ThiS-thiocarboxylate. This is a step in the synthesis of thiazole, in the thiamine biosynthesis pathway. The sulfur is donated as persulfide by IscS. The chain is Probable tRNA sulfurtransferase from Thermus thermophilus (strain ATCC 27634 / DSM 579 / HB8).